Consider the following 421-residue polypeptide: Testin (421 aa).

In terms of domain architecture, PET spans 92 to 199 (MILTNPVAAK…GDVKLPCEMD (108 aa)). The tract at residues 133 to 164 (EKQPVAGSEGAQYRKKQLAKQLPAHDQDPSKC) is disordered. Basic and acidic residues predominate over residues 155 to 164 (PAHDQDPSKC). 3 LIM zinc-binding domains span residues 234–297 (YSCY…CDSE), 299–359 (PRCA…NHAV), and 362–421 (QGCH…KMMS).

This sequence belongs to the prickle / espinas / testin family. As to quaternary structure, interacts via LIM domain 1 with ZYX. Interacts (via LIM domain 3) with ENAH and VASP. Interacts with ALKBH4, talin, actin, alpha-actinin, GRIP1 and PXN. Interacts (via LIM domain 2) with ACTL7A (via N-terminus). Heterodimer with ACTL7A; the heterodimer interacts with ENAH to form a heterotrimer.

Its subcellular location is the cytoplasm. It is found in the cell junction. The protein localises to the focal adhesion. Its function is as follows. Scaffold protein that may play a role in cell adhesion, cell spreading and in the reorganization of the actin cytoskeleton. Plays a role in the regulation of cell proliferation. May act as a tumor suppressor. The protein is Testin (TES) of Ateles geoffroyi (Black-handed spider monkey).